A 698-amino-acid polypeptide reads, in one-letter code: Dolichyl-diphosphooligosaccharide--protein glycosyltransferase subunit 2 (698 aa).

The first 29 residues, 1 to 29, serve as a signal peptide directing secretion; that stretch reads MAAAGGLPASATLLLLVIAAVAVAPLASA. The Lumenal portion of the chain corresponds to 30 to 600; the sequence is VRPVSDAHRS…RSPEKRPPKE (571 aa). The helical transmembrane segment at 601-621 threads the bilayer; that stretch reads LSFAFTGLTLLPIVGFLIGLM. Topologically, residues 622 to 638 are cytoplasmic; sequence RLGVNLKNFPSLPAPAA. The chain crosses the membrane as a helical span at residues 639-659; that stretch reads FASLFHAGIGAVLLLYVLFWI. Lys-660 is a topological domain (lumenal). A helical transmembrane segment spans residues 661–681; sequence LDLFTTLKYLSFLGVFLVFVG. Residues 682 to 698 lie on the Cytoplasmic side of the membrane; it reads HRALSYLSSTSAKQKTA.

The protein belongs to the SWP1 family. In terms of assembly, component of the oligosaccharyltransferase (OST) complex.

The protein resides in the endoplasmic reticulum membrane. Its pathway is protein modification; protein glycosylation. In terms of biological role, subunit of the oligosaccharyl transferase (OST) complex that catalyzes the initial transfer of a defined glycan (Glc(3)Man(9)GlcNAc(2) in eukaryotes) from the lipid carrier dolichol-pyrophosphate to an asparagine residue within an Asn-X-Ser/Thr consensus motif in nascent polypeptide chains, the first step in protein N-glycosylation. N-glycosylation occurs cotranslationally and the complex associates with the Sec61 complex at the channel-forming translocon complex that mediates protein translocation across the endoplasmic reticulum (ER). All subunits are required for a maximal enzyme activity. This is Dolichyl-diphosphooligosaccharide--protein glycosyltransferase subunit 2 (RPN2) from Oryza sativa subsp. japonica (Rice).